The primary structure comprises 523 residues: Calcium and calcium/calmodulin-dependent serine/threonine-protein kinase DMI-3 (523 aa).

A Protein kinase domain is found at 12–306 (YEVSEILGRG…ALELLSDPWV (295 aa)). Residues 18 to 26 (LGRGGFSVV) and Lys47 each bind ATP. Asp171 serves as the catalytic Proton acceptor. Thr271 is subject to Phosphothreonine. A calmodulin-binding region spans residues 329-342 (ARRKLRAAAIASVW). EF-hand domains follow at residues 400-435 (SLIP…LKNS), 436-471 (KGED…LPYD), and 478-513 (TEPG…DSSL). Residues Asp413, Asn415, Asp417, Thr419, Glu424, Asp449, Asp451, Ser453, Cys455, Glu460, Asp491, Asn493, Asp495, Lys497, and Glu502 each contribute to the Ca(2+) site.

Belongs to the protein kinase superfamily. CAMK Ser/Thr protein kinase family. CaMK subfamily. In terms of assembly, interacts with IPD3. In terms of processing, autophosphorylation. In terms of tissue distribution, highly expressed in roots. Expressed in root hairs and nodules. Expressed at low levels in flowers. Not detected in leaves or stems.

It localises to the nucleus. The catalysed reaction is L-seryl-[protein] + ATP = O-phospho-L-seryl-[protein] + ADP + H(+). It catalyses the reaction L-threonyl-[protein] + ATP = O-phospho-L-threonyl-[protein] + ADP + H(+). Activated by calcium. Autophosphorylation may play an important role in the regulation of the kinase activity. In terms of biological role, during nodulation, plays a central role in bacterial infection and contributes to nodule organogenesis. Protein kinase that recognizes the calcium spiking induced by Nod factors and translates this signal to components controlling nodulation and mycorrhizal infection responses. May phosphorylate the NSP1 protein. Required in epidermal and cortical cells to promote infection thread (IT) formation in root hairs. The protein is Calcium and calcium/calmodulin-dependent serine/threonine-protein kinase DMI-3 of Medicago truncatula (Barrel medic).